Consider the following 110-residue polypeptide: Movement protein TGB2 (110 aa).

The Cytoplasmic segment spans residues 1 to 10 (MSGAHHLTPP). A helical transmembrane segment spans residues 11–34 (TDYGKPVLAASIGISLALLVYTAT). Over 35–76 (RSTLPHVGDNLHALPHGGRYVDGTKSISYFSPSASKTRDPFP) the chain is Lumenal. A helical transmembrane segment spans residues 77–92 (FAFLLILTLSGLILLL). Topologically, residues 93–110 (SRRRSNPHSCPSCGTPHA) are cytoplasmic.

Belongs to the Tymovirales TGBp2 protein family.

It is found in the host endoplasmic reticulum membrane. In terms of biological role, plays a role in viral cell-to-cell propagation, by facilitating genome transport to neighboring plant cells through plasmosdesmata,. The sequence is that of Movement protein TGB2 from Plantago asiatica (P1AMV).